The sequence spans 548 residues: Thermolysin (548 aa).

Residues 1–28 (MKMKMKLASFGLAAGLAAQVFLPYNALA) form the signal peptide. The propeptide at 29-232 (STEHVTWNQQ…DAAKPGDVKS (204 aa)) is activation peptide. The Ca(2+) site is built by Asp289, Asp291, Gln293, and Asp370. His374 provides a ligand contact to Zn(2+). Glu375 is an active-site residue. 2 residues coordinate Zn(2+): His378 and Glu398. 9 residues coordinate Ca(2+): Glu409, Asn415, Asp417, Glu419, Glu422, Tyr425, Thr426, Ile429, and Asp432. Catalysis depends on His463, which acts as the Proton donor.

This sequence belongs to the peptidase M4 family. Ca(2+) is required as a cofactor. It depends on Zn(2+) as a cofactor.

Its subcellular location is the secreted. The catalysed reaction is Preferential cleavage: Xaa-|-Leu &gt; Xaa-|-Phe.. In terms of biological role, extracellular zinc metalloprotease. This Bacillus thermoproteolyticus protein is Thermolysin (npr).